Consider the following 419-residue polypeptide: UDP-N-acetylglucosamine 1-carboxyvinyltransferase 1 (419 aa).

22-23 (KN) serves as a coordination point for phosphoenolpyruvate. Position 92 (arginine 92) interacts with UDP-N-acetyl-alpha-D-glucosamine. The active-site Proton donor is the cysteine 116. The residue at position 116 (cysteine 116) is a 2-(S-cysteinyl)pyruvic acid O-phosphothioketal. Residues 121 to 125 (RPIDL), aspartate 306, and isoleucine 328 contribute to the UDP-N-acetyl-alpha-D-glucosamine site.

The protein belongs to the EPSP synthase family. MurA subfamily.

The protein localises to the cytoplasm. It carries out the reaction phosphoenolpyruvate + UDP-N-acetyl-alpha-D-glucosamine = UDP-N-acetyl-3-O-(1-carboxyvinyl)-alpha-D-glucosamine + phosphate. The protein operates within cell wall biogenesis; peptidoglycan biosynthesis. Cell wall formation. Adds enolpyruvyl to UDP-N-acetylglucosamine. The chain is UDP-N-acetylglucosamine 1-carboxyvinyltransferase 1 from Streptococcus agalactiae serotype Ia (strain ATCC 27591 / A909 / CDC SS700).